Reading from the N-terminus, the 199-residue chain is NAD(P)H dehydrogenase (quinone) (199 aa).

The region spanning 4 to 190 is the Flavodoxin-like domain; sequence MLVLYYSAYG…DGARFQGRRV (187 aa). FMN-binding positions include 10–15 and 78–80; these read SAYGYM and TRY. An NAD(+)-binding site is contributed by Y12. Residue W98 coordinates substrate. Residues 113 to 119 and H134 contribute to the FMN site; that span reads STATQHG. The interval 157 to 181 is disordered; sequence GGAPYGMTTTADGDGSRQPSAQELD. Residues 163–177 are compositionally biased toward polar residues; that stretch reads MTTTADGDGSRQPSA.

Belongs to the WrbA family. The cofactor is FMN.

It carries out the reaction a quinone + NADH + H(+) = a quinol + NAD(+). It catalyses the reaction a quinone + NADPH + H(+) = a quinol + NADP(+). The sequence is that of NAD(P)H dehydrogenase (quinone) from Brucella melitensis biotype 2 (strain ATCC 23457).